The primary structure comprises 422 residues: Lactoyl-CoA dehydratase subunit alpha (422 aa).

This sequence belongs to the FldB/FldC dehydratase alpha/beta subunit family. Heterodimer of an alpha (LcdA) and a beta (LcdB) subunit. Requires [4Fe-4S] cluster as cofactor. FMN serves as cofactor. Riboflavin is required as a cofactor. It depends on Mg(2+) as a cofactor.

It carries out the reaction (R)-lactoyl-CoA = acryloyl-CoA + H2O. It catalyses the reaction (2R)-hydroxybutanoyl-CoA = (2E)-butenoyl-CoA + H2O. With respect to regulation, activated by the LcdC protein. Involved in the acrylate pathway for the conversion of D-lactic acid to propionic acid. Catalyzes the reversible dehydration of Lactoyl-CoA and 2-hydroxybutyroyl-CoA to acryloyl-CoA and crotonyl-CoA, respectively. The polypeptide is Lactoyl-CoA dehydratase subunit alpha (lcdA) (Anaerotignum propionicum (Clostridium propionicum)).